Reading from the N-terminus, the 296-residue chain is Transcription factor MYB72 (296 aa).

2 consecutive HTH myb-type domains span residues 11-63 (KNKV…INYL) and 64-118 (RPDV…KKRL). 2 consecutive DNA-binding regions (H-T-H motif) follow at residues 39-63 (WRSLPKLAGLLRCGKSCRLRWINYL) and 91-114 (WSKIASFLPGRTDNEIKNVWNTHL). The tract at residues 118-144 (LTPSSSSSSLSSTHDQSTKADHDKNCD) is disordered. Basic and acidic residues predominate over residues 133–144 (QSTKADHDKNCD).

As to quaternary structure, interacts with EIL3.

The protein localises to the nucleus. Involved in metal ions homeostasis, including iron ions (Fe) acquisition, via the regulation of NAS4 and NAS2 genes expression. Necessary for plant survival in alkaline soil where iron availability is greatly restricted. Involved in the up-regulation of several biosynthesis genes of secondary metabolites involved in iron uptake under conditions of iron deficiency. Triggers tolerance to nickel (Ni) and zinc (Zn) ions. Required in the roots during early signaling steps of rhizobacteria-mediated (e.g. P.fluorescens WCS417r) and beneficial fungi-mediated (e.g. T.asperellum T34) broad-spectrum induced systemic resistance (ISR) against several pathogens (e.g. P.syringae pv tomato, H.parasitica, P.cucumerina, A.brassicicola and B.cinerea) and implying enhanced callose deposition. Required for the induction of some genes (e.g. BGLU42) upon rhizobacteria-mediated ISR. The polypeptide is Transcription factor MYB72 (Arabidopsis thaliana (Mouse-ear cress)).